Consider the following 322-residue polypeptide: Acetyl-coenzyme A carboxylase carboxyl transferase subunit alpha (322 aa).

A CoA carboxyltransferase C-terminal domain is found at 39–293 (RLAAKSQQLT…KRALAESLRQ (255 aa)).

The protein belongs to the AccA family. In terms of assembly, acetyl-CoA carboxylase is a heterohexamer composed of biotin carboxyl carrier protein (AccB), biotin carboxylase (AccC) and two subunits each of ACCase subunit alpha (AccA) and ACCase subunit beta (AccD).

Its subcellular location is the cytoplasm. It catalyses the reaction N(6)-carboxybiotinyl-L-lysyl-[protein] + acetyl-CoA = N(6)-biotinyl-L-lysyl-[protein] + malonyl-CoA. The protein operates within lipid metabolism; malonyl-CoA biosynthesis; malonyl-CoA from acetyl-CoA: step 1/1. In terms of biological role, component of the acetyl coenzyme A carboxylase (ACC) complex. First, biotin carboxylase catalyzes the carboxylation of biotin on its carrier protein (BCCP) and then the CO(2) group is transferred by the carboxyltransferase to acetyl-CoA to form malonyl-CoA. This Ralstonia nicotianae (strain ATCC BAA-1114 / GMI1000) (Ralstonia solanacearum) protein is Acetyl-coenzyme A carboxylase carboxyl transferase subunit alpha.